Reading from the N-terminus, the 200-residue chain is Elongation factor Ts (200 aa).

Positions 80–83 are involved in Mg(2+) ion dislocation from EF-Tu; that stretch reads TDFV.

This sequence belongs to the EF-Ts family.

The protein localises to the cytoplasm. In terms of biological role, associates with the EF-Tu.GDP complex and induces the exchange of GDP to GTP. It remains bound to the aminoacyl-tRNA.EF-Tu.GTP complex up to the GTP hydrolysis stage on the ribosome. The chain is Elongation factor Ts from Caldanaerobacter subterraneus subsp. tengcongensis (strain DSM 15242 / JCM 11007 / NBRC 100824 / MB4) (Thermoanaerobacter tengcongensis).